The primary structure comprises 183 residues: Capsid protein (183 aa).

Residues Asn-136–Cys-183 are disordered. Over residues Val-149–Ser-176 the composition is skewed to basic residues. 3 positions are modified to phosphoserine; by host: Ser-155, Ser-162, and Ser-170. The stretch at Ser-155–Pro-161 is one 1; half-length repeat. A 3 X 8 AA repeats of S-P-R-R-R-[PR]-S-Q region spans residues Ser-155 to Gln-177. Residues Arg-158–Arg-175 carry the Bipartite nuclear localization signal motif. 2 tandem repeats follow at residues Ser-162–Gln-169 and Ser-170–Gln-177. The tract at residues Gln-177 to Cys-183 is RNA binding.

Belongs to the orthohepadnavirus core antigen family. As to quaternary structure, homodimerizes, then multimerizes. Interacts with cytosol exposed regions of viral L glycoprotein present in the reticulum-to-Golgi compartment. Interacts with human FLNB. Phosphorylated form interacts with host importin alpha; this interaction depends on the exposure of the NLS, which itself depends upon genome maturation and/or phosphorylation of the capsid protein. Interacts with host NUP153. Phosphorylated by host SRPK1, SRPK2, and maybe protein kinase C or GAPDH. Phosphorylation is critical for pregenomic RNA packaging. Protein kinase C phosphorylation is stimulated by HBx protein and may play a role in transport of the viral genome to the nucleus at the late step during the viral replication cycle.

The protein localises to the virion. It is found in the host cytoplasm. In terms of biological role, self assembles to form an icosahedral capsid. Most capsids appear to be large particles with an icosahedral symmetry of T=4 and consist of 240 copies of capsid protein, though a fraction forms smaller T=3 particles consisting of 180 capsid proteins. Entering capsids are transported along microtubules to the nucleus. Phosphorylation of the capsid is thought to induce exposure of nuclear localization signal in the C-terminal portion of the capsid protein that allows binding to the nuclear pore complex via the importin (karyopherin-) alpha and beta. Capsids are imported in intact form through the nuclear pore into the nuclear basket, where it probably binds NUP153. Only capsids that contain the mature viral genome can release the viral DNA and capsid protein into the nucleoplasm. Immature capsids get stuck in the basket. Capsids encapsulate the pre-genomic RNA and the P protein. Pre-genomic RNA is reverse-transcribed into DNA while the capsid is still in the cytoplasm. The capsid can then either be directed to the nucleus, providing more genomes for transcription, or bud through the endoplasmic reticulum to provide new virions. This is Capsid protein from Hepatitis B virus genotype D subtype ayw (isolate France/Tiollais/1979) (HBV-D).